The primary structure comprises 129 residues: MTIAMLLTLHLICVALSVSLFVARYWWRYCGHALAAARWTRIVPPVIDTLLLLSGIGLIVKTHILPFTESGSWLTEKLFGVIIYIVLGFIALDYRQARSQQARFIAFPLALVVLYIIIKLATTKIPLLG.

Residues 1–2 (MT) are Periplasmic-facing. Residues 3–23 (IAMLLTLHLICVALSVSLFVA) traverse the membrane as a helical segment. The Cytoplasmic portion of the chain corresponds to 24-41 (RYWWRYCGHALAAARWTR). Residues 42–62 (IVPPVIDTLLLLSGIGLIVKT) traverse the membrane as a helical segment. The Periplasmic segment spans residues 63-71 (HILPFTESG). Residues 72 to 92 (SWLTEKLFGVIIYIVLGFIAL) traverse the membrane as a helical segment. Residues 93–104 (DYRQARSQQARF) lie on the Cytoplasmic side of the membrane. A helical membrane pass occupies residues 105-125 (IAFPLALVVLYIIIKLATTKI). At 126 to 129 (PLLG) the chain is on the periplasmic side.

It belongs to the SirB2 family.

The protein localises to the cell inner membrane. Its function is as follows. Required for maximal expression of sirC, not required to invade host cells. This is Protein SirB2 (sirB2) from Salmonella typhi.